The following is a 342-amino-acid chain: Farnesyl pyrophosphate synthase 1 (342 aa).

Lys47, Arg50, and Gln86 together coordinate isopentenyl diphosphate. Positions 93 and 97 each coordinate Mg(2+). A dimethylallyl diphosphate-binding site is contributed by Arg102. Arg103 contributes to the isopentenyl diphosphate binding site. Residues Lys190, Thr191, Gln229, Lys246, and Lys255 each coordinate dimethylallyl diphosphate.

This sequence belongs to the FPP/GGPP synthase family. It depends on Mg(2+) as a cofactor.

Its subcellular location is the cytoplasm. The enzyme catalyses isopentenyl diphosphate + dimethylallyl diphosphate = (2E)-geranyl diphosphate + diphosphate. It catalyses the reaction isopentenyl diphosphate + (2E)-geranyl diphosphate = (2E,6E)-farnesyl diphosphate + diphosphate. The protein operates within isoprenoid biosynthesis; farnesyl diphosphate biosynthesis; farnesyl diphosphate from geranyl diphosphate and isopentenyl diphosphate: step 1/1. It functions in the pathway isoprenoid biosynthesis; geranyl diphosphate biosynthesis; geranyl diphosphate from dimethylallyl diphosphate and isopentenyl diphosphate: step 1/1. Catalyzes the sequential condensation of isopentenyl pyrophosphate with the allylic pyrophosphates, dimethylallyl pyrophosphate, and then with the resultant geranylpyrophosphate to the ultimate product farnesyl pyrophosphate. This is Farnesyl pyrophosphate synthase 1 (FPS1) from Lupinus albus (White lupine).